A 206-amino-acid polypeptide reads, in one-letter code: Triafestin-1 (206 aa).

Residues 1 to 18 form the signal peptide; that stretch reads MKTILAVIFFGILAFAFA. Asparagine 55 carries an N-linked (GlcNAc...) asparagine glycan.

It belongs to the calycin superfamily. Triabin family. In terms of assembly, interacts with host coagulation factor XII (F12) (inactive and activated) (via amino acids 1-77). Interacts with host high molecular weight kininogen (KNG1) (via amino acids 402-532). In terms of tissue distribution, salivary gland (at protein level).

It is found in the secreted. Its activity is regulated as follows. Zn(2+) modulates binding to host coagulation factor XII (F12) and high molecular weight kininogen (KNG1). Suppresses activation of the host plasma kallikrein-kinin system, leading to inhibition of the intrinsic coagulation pathway. Blocks host coagulation factor XII (F12) and prekallikrein (KLKB1) reciprocal activation without affecting their amidolytic activities. Blocks binding of host F12 and high molecular weight kininogen (KNG1) to negatively charged surfaces. Attenuates generation of bradykinin by interfering with activation of host kallikrein-kinin system. This is Triafestin-1 from Triatoma infestans (Assassin bug).